A 235-amino-acid polypeptide reads, in one-letter code: MRRGAPQDQELVGPGAPGRGSRGAPPPSGPVVPVLVFPPDLVFRADQRSGPRQLLTLYNPTGAVLRFRVLCTAPAKYTVFDAEGYVKPQSCIDIVIRHVAPHPRNYDVQDRFRIELSEEGTEGRVVGRKDITSVLRAPAYPLELQGQSDPTPHPEPHSWTASSTAQPFPENPHPQLATSSFLLFLLMGTVSVAFLLLPLQDELGSQLPQILHVSLGQKLVAAYVLGLLTMVFLRT.

2 disordered regions span residues 1-30 and 143-170; these read MRRG…PSGP and ELQG…PFPE. An MSP domain is found at 33–145; that stretch reads PVLVFPPDLV…RAPAYPLELQ (113 aa). Transmembrane regions (helical) follow at residues 180–200 and 213–233; these read SFLL…LPLQ and VSLG…MVFL.

Its subcellular location is the membrane. The polypeptide is Motile sperm domain-containing protein 3 (MOSPD3) (Bos taurus (Bovine)).